Reading from the N-terminus, the 473-residue chain is Bifunctional protein HldE (473 aa).

The interval 1-318 (MKLTLPRYDQ…RAVQREEGSE (318 aa)) is ribokinase. Residue 194–197 (NLHE) participates in ATP binding. Asp263 is a catalytic residue. Positions 343–473 (FTNGCFDILH…TAIVEKIRNK (131 aa)) are cytidylyltransferase.

The protein in the N-terminal section; belongs to the carbohydrate kinase PfkB family. In the C-terminal section; belongs to the cytidylyltransferase family. As to quaternary structure, homodimer.

It carries out the reaction D-glycero-beta-D-manno-heptose 7-phosphate + ATP = D-glycero-beta-D-manno-heptose 1,7-bisphosphate + ADP + H(+). It catalyses the reaction D-glycero-beta-D-manno-heptose 1-phosphate + ATP + H(+) = ADP-D-glycero-beta-D-manno-heptose + diphosphate. The protein operates within nucleotide-sugar biosynthesis; ADP-L-glycero-beta-D-manno-heptose biosynthesis; ADP-L-glycero-beta-D-manno-heptose from D-glycero-beta-D-manno-heptose 7-phosphate: step 1/4. It participates in nucleotide-sugar biosynthesis; ADP-L-glycero-beta-D-manno-heptose biosynthesis; ADP-L-glycero-beta-D-manno-heptose from D-glycero-beta-D-manno-heptose 7-phosphate: step 3/4. Catalyzes the phosphorylation of D-glycero-D-manno-heptose 7-phosphate at the C-1 position to selectively form D-glycero-beta-D-manno-heptose-1,7-bisphosphate. Functionally, catalyzes the ADP transfer from ATP to D-glycero-beta-D-manno-heptose 1-phosphate, yielding ADP-D-glycero-beta-D-manno-heptose. This chain is Bifunctional protein HldE, found in Ectopseudomonas mendocina (strain ymp) (Pseudomonas mendocina).